Here is a 138-residue protein sequence, read N- to C-terminus: Cysteine desulfuration protein SufE (138 aa).

C51 (cysteine persulfide intermediate) is an active-site residue.

The protein belongs to the SufE family. As to quaternary structure, homodimer. Interacts with SufS.

The protein localises to the cytoplasm. It functions in the pathway cofactor biosynthesis; iron-sulfur cluster biosynthesis. Its function is as follows. Participates in cysteine desulfuration mediated by SufS. Cysteine desulfuration mobilizes sulfur from L-cysteine to yield L-alanine and constitutes an essential step in sulfur metabolism for biosynthesis of a variety of sulfur-containing biomolecules. Functions as a sulfur acceptor for SufS, by mediating the direct transfer of the sulfur atom from the S-sulfanylcysteine of SufS, an intermediate product of cysteine desulfuration process. In Escherichia coli O17:K52:H18 (strain UMN026 / ExPEC), this protein is Cysteine desulfuration protein SufE.